The sequence spans 161 residues: Troponin C, slow skeletal and cardiac muscles (161 aa).

At Met1 the chain carries N-acetylmethionine. EF-hand domains are found at residues 16-51 (QKNE…LGQN), 52-87 (PTPE…CMKD), 92-127 (KTEE…TGET), and 128-161 (ITED…KGVE). Positions 65, 67, 69, 71, 105, 107, 109, 111, 116, 143, 145, 147, and 152 each coordinate Ca(2+).

This sequence belongs to the troponin C family.

Troponin is the central regulatory protein of striated muscle contraction. Tn consists of three components: Tn-I which is the inhibitor of actomyosin ATPase, Tn-T which contains the binding site for tropomyosin and Tn-C. The binding of calcium to Tn-C abolishes the inhibitory action of Tn on actin filaments. In Coturnix japonica (Japanese quail), this protein is Troponin C, slow skeletal and cardiac muscles (TNNC1).